The primary structure comprises 331 residues: Pantothenate kinase (331 aa).

Residue 109 to 116 (GSVAVGKS) participates in ATP binding.

This sequence belongs to the prokaryotic pantothenate kinase family.

The protein resides in the cytoplasm. The enzyme catalyses (R)-pantothenate + ATP = (R)-4'-phosphopantothenate + ADP + H(+). Its pathway is cofactor biosynthesis; coenzyme A biosynthesis; CoA from (R)-pantothenate: step 1/5. The protein is Pantothenate kinase of Sinorhizobium medicae (strain WSM419) (Ensifer medicae).